A 491-amino-acid polypeptide reads, in one-letter code: Chromosomal replication initiator protein DnaA (491 aa).

Residues 1–69 are domain I, interacts with DnaA modulators; it reads MTTWDKCLKK…TIQECHGNDL (69 aa). A domain II region spans residues 69-154; sequence LIIEYSNKKF…KEDEEYSFGL (86 aa). The domain III, AAA+ region stretch occupies residues 155–371; that stretch reads PLKEKYVFDS…GALNRVLTTS (217 aa). ATP-binding residues include glycine 199, glycine 201, lysine 202, and threonine 203. The interval 372-491 is domain IV, binds dsDNA; it reads KFNHKDPTIE…YELLLDKISR (120 aa).

It belongs to the DnaA family. In terms of assembly, oligomerizes as a right-handed, spiral filament on DNA at oriC.

The protein resides in the cytoplasm. Plays an essential role in the initiation and regulation of chromosomal replication. ATP-DnaA binds to the origin of replication (oriC) to initiate formation of the DNA replication initiation complex once per cell cycle. Binds the DnaA box (a 9 base pair repeat at the origin) and separates the double-stranded (ds)DNA. Forms a right-handed helical filament on oriC DNA; dsDNA binds to the exterior of the filament while single-stranded (ss)DNA is stabiized in the filament's interior. The ATP-DnaA-oriC complex binds and stabilizes one strand of the AT-rich DNA unwinding element (DUE), permitting loading of DNA polymerase. After initiation quickly degrades to an ADP-DnaA complex that is not apt for DNA replication. Binds acidic phospholipids. In Francisella tularensis subsp. holarctica (strain OSU18), this protein is Chromosomal replication initiator protein DnaA.